We begin with the raw amino-acid sequence, 96 residues long: U-stichotoxin-Hau2b (96 aa).

An N-terminal signal peptide occupies residues 1–18 (MKPIFIVALLFSTCLVNA). Propeptides lie at residues 19–29 (KPSIDDAEMKR) and 30–33 (EPKP). Disulfide bonds link cysteine 40–cysteine 51 and cysteine 43–cysteine 58. Propeptides lie at residues 62-64 (RKR) and 65-68 (EPKP). 2 disulfides stabilise this stretch: cysteine 75–cysteine 86 and cysteine 78–cysteine 93.

Belongs to the sea anemone BBH family.

The protein resides in the secreted. It localises to the nematocyst. Neurotoxin that paralyzes freshwater crabs at high concentration. This Heteractis aurora (Banded sea anemone) protein is U-stichotoxin-Hau2b.